The chain runs to 179 residues: Fucolectin-4 (179 aa).

Residues 1-23 (MEVKTIMLLFQILAISTLKQGSA) form the signal peptide. The F5/8 type C-like stretch occupies residues 31 to 179 (EENVALRGRA…VEVNALLPVN (149 aa)). Ca(2+) is bound by residues Asn58, Asp61, Asn63, and Ser72. 3 cysteine pairs are disulfide-bonded: Cys73–Cys168, Cys104–Cys105, and Cys130–Cys146. Alpha-L-fucose-binding residues include His75 and Arg101. Residues 101-103 (RGD) carry the Cell attachment site motif. Arg108 contacts alpha-L-fucose. Cys168 and Glu169 together coordinate Ca(2+).

Belongs to the fucolectin family. As to quaternary structure, homotrimer. In terms of tissue distribution, gill mucous cells.

The protein localises to the secreted. Acts as a defensive agent. Recognizes blood group fucosylated oligosaccharides including A, B, H and Lewis B-type antigens. Does not recognize Lewis A antigen and has low affinity for monovalent haptens. In Anguilla japonica (Japanese eel), this protein is Fucolectin-4.